The chain runs to 167 residues: Putative peroxiredoxin-A (167 aa).

Residues 4 to 167 form the Thioredoxin domain; it reads IKRGDRFPTT…STAQKIIAKL (164 aa). The Cysteine sulfenic acid (-SOH) intermediate role is filled by cysteine 53. Residues 165 to 167 carry the Microbody targeting signal motif; sequence AKL.

It belongs to the peroxiredoxin family. Prx5 subfamily.

The protein localises to the peroxisome membrane. It carries out the reaction a hydroperoxide + [thioredoxin]-dithiol = an alcohol + [thioredoxin]-disulfide + H2O. Functionally, thiol-specific peroxidase that catalyzes the reduction of hydrogen peroxide and organic hydroperoxides to water and alcohols, respectively. Plays a role in cell protection against oxidative stress by detoxifying peroxides and as sensor of hydrogen peroxide-mediated signaling events. The sequence is that of Putative peroxiredoxin-A (PMPA) from Candida boidinii (Yeast).